We begin with the raw amino-acid sequence, 176 residues long: Small ribosomal subunit protein uS5c (176 aa).

One can recognise an S5 DRBM domain in the interval Leu-26–Leu-89.

Belongs to the universal ribosomal protein uS5 family. In terms of assembly, part of the 30S ribosomal subunit. Contacts protein S4.

Its subcellular location is the plastid. The protein resides in the chloroplast. Functionally, with S4 and S12 plays an important role in translational accuracy. In Phaeodactylum tricornutum (strain CCAP 1055/1), this protein is Small ribosomal subunit protein uS5c (rps5).